The chain runs to 4095 residues: Protein adenylyltransferase and cysteine protease IbpA (4095 aa).

Positions 1 to 97 (MNKNCYKLIF…MVAAPNFAQS (97 aa)) are cleaved as a signal peptide. 2 binds bovine IgG2 Fc regions span residues 972 to 1515 (SERI…FVKA) and 1116 to 1255 (SEVQ…FLKE). Disordered regions lie at residues 1082–1117 (EVSDDWERDPDEPDEPDYKTESRLETRDRFDTLPSE), 1130–1154 (KEKAQQKRQAEALQAKTKNEQLQSD), 1204–1223 (QEALAKQKQEQQKQADAKAK), 1625–1652 (TVSHERDSQNGEKTNIGGASSNTGTGFT), and 1705–1732 (EEDEAKAEQQAKAKAAPDATDNAAQKEE). Over residues 1087-1096 (WERDPDEPDE) the composition is skewed to acidic residues. 2 stretches are compositionally biased toward basic and acidic residues: residues 1097–1117 (PDYKTESRLETRDRFDTLPSE) and 1130–1139 (KEKAQQKRQA). Residues 1116–1247 (SEVQDKLRQK…AKDHQIEEAL (132 aa)) adopt a coiled-coil conformation. A compositionally biased stretch (low complexity) spans 1716–1727 (KAKAAPDATDNA). Repeat copies occupy residues 2250–2271 (YSTLGDQNANKGRKLPNGSDDI), 2272–2295 (YSLLGKVKVSGDEPVYDKVSAEGA), 2296–2317 (YDLLGDSNANKGRTLRNNSDDL), 2318–2343 (YSTVGDANSDISRIRSNVYDEIAAGP), 2344–2365 (YSLLGRTKAAEEHIYEQIGEGP), 2366–2387 (YSLLGNGSAVRNRTLGGESNST), 2388–2413 (YSTVGDANSDISRIRSNVYDEIVAGP), 2414–2435 (YSLLGKPKAAEEHIYEQIGEGP), 2436–2457 (YSLLGNGSAVRNRTLGGESDSP), 2458–2483 (YSTVGDANSDISRIRSNVYDEIVAGP), 2484–2505 (YSLLGRTKAAEEHIYEQIGEGP), and 2506–2527 (YSLLGNGSAVRNRTLGGESDSP). Residues 2250-2527 (YSTLGDQNAN…RTLGGESDSP (278 aa)) form a 12 X 22 AA approximate repeats region. Composition is skewed to polar residues over residues 2592 to 2611 (SDTEAGNGTYSEITSRTRNA) and 2794 to 2803 (TAPQKTSPVK). 6 disordered regions span residues 2592–2617 (SDTEAGNGTYSEITSRTRNANDPLPP), 2765–2809 (TIGE…SAEG), 2825–2894 (AKGQ…SPKR), 2914–2933 (LKSKEDQANPAKAEVSEPIY), 2943–3033 (LARA…KSED), and 3049–3069 (NKSQAKEAKSEQETVSKPNYD). Positions 2880-2889 (PFPSEFSSEP) are enriched in low complexity. Polar residues-rich tracts occupy residues 2977–2996 (SNLSDSISNETIAENGQSVA) and 3005–3018 (AESNRNNNGNQKLQ). The segment covering 3052 to 3062 (QAKEAKSEQET) has biased composition (basic and acidic residues). A Fido 1 domain is found at 3218-3355 (LTVEMIEKLN…AEVVKEFLTE (138 aa)). The segment at 3222–4095 (MIEKLNHGLR…FNVVNYKKNN (874 aa)) is yopT-like. The binds bovine IgG2 Fc stretch occupies residues 3354 to 3698 (TELGKKSSPQ…VDFINRAKNE (345 aa)). 2 disordered regions span residues 3357–3415 (GKKS…PSVP) and 3432–3454 (AELKDAAGGNKKAAEKSEGATGV). Polar residues-rich tracts occupy residues 3360-3379 (SSPQEGGANNQNGQATSPVT) and 3388-3401 (VENTQSADSLTIKQ). Residues 3443 to 3454 (KAAEKSEGATGV) are compositionally biased toward basic and acidic residues. Positions 3535–3557 (IPEATVKQMSHLPEFDDILTEGA) are arm region. One can recognise a Fido 2 domain in the interval 3640 to 3777 (LTVQMIENLN…SEVVVEFLKE (138 aa)). Residues 3670–3671 (KE), 3722–3724 (GNG), arginine 3728, and glutamine 3757 each bind ATP. The span at 3783 to 3798 (SKEDNEQNLEKTDRTS) shows a compositional bias: basic and acidic residues. Residues 3783–3829 (SKEDNEQNLEKTDRTSTDLTESAVENSAALSSGTVRSATVSETVTET) form a disordered region. Residues 3799-3815 (TDLTESAVENSAALSSG) show a composition bias toward polar residues. Residues 3816 to 3829 (TVRSATVSETVTET) show a composition bias toward low complexity. Active-site for cysteine protease activity residues include cysteine 3910, histidine 4033, and aspartate 4048.

This sequence in the central section; belongs to the fic family. The protein in the C-terminal section; belongs to the peptidase C58 family. In terms of assembly, immunoglobulin-binding protein. Post-translationally, the long form of the protein is probably processed, and/or the transcript may be subject to differential translational initiation.

The protein resides in the secreted. It is found in the cell outer membrane. The catalysed reaction is L-tyrosyl-[protein] + ATP = O-(5'-adenylyl)-L-tyrosyl-[protein] + diphosphate. It carries out the reaction L-threonyl-[protein] + ATP = 3-O-(5'-adenylyl)-L-threonyl-[protein] + diphosphate. Adenylyltransferase involved in virulence by mediating the addition of adenosine 5'-monophosphate (AMP) to specific tyrosine residue of host Rho GTPases RhoA, Rac and Cdc42. The resulting AMPylation inactivates Rho GTPases, thereby inhibiting actin assembly in infected cells. Probably also acts as a cysteine protease, which may play a central role after invasion of host cell and in virulence. Possible member (with IbpB) of a 2 partner secretion. Probably able to bind bovine epithelial cells (host cells). May participate in the formation of fibrils at the surface of the bacteria. The protein is Protein adenylyltransferase and cysteine protease IbpA (ibpA) of Histophilus somni (strain 2336) (Haemophilus somnus).